We begin with the raw amino-acid sequence, 2078 residues long: Nascent polypeptide-associated complex subunit alpha, muscle-specific form (2078 aa).

Disordered regions lie at residues 1-21, 37-96, 595-614, and 732-1944; these read MPGE…QPQA, ALGQ…LGTA, LGEP…PLGV, and KSVP…KAMS. Composition is skewed to polar residues over residues 9-21 and 60-75; these read VPAT…QPQA and AANQ…TIAS. The segment covering 775-786 has biased composition (low complexity); that stretch reads SGASATASSKGT. The segment covering 837-847 has biased composition (polar residues); it reads PENSLSFQGSK. Serine 917 carries the post-translational modification Phosphoserine. The segment covering 933–1020 has biased composition (pro residues); the sequence is SPSPKGAPTP…PPAVTPPSPK (88 aa). Residues 1045–1067 are compositionally biased toward low complexity; sequence GSPAATPLPKGAPTTPAATLPSP. A compositionally biased stretch (pro residues) spans 1080–1113; that stretch reads PTPPAATPPSPKGGPATPSPKGAPMPPAATPPSP. Low complexity predominate over residues 1114-1130; sequence KGGLATPPHKGAPTTPA. Composition is skewed to pro residues over residues 1131-1147 and 1154-1170; these read ATPP…PPKG. Position 1181 is a phosphoserine (serine 1181). 3 stretches are compositionally biased toward low complexity: residues 1183 to 1199, 1206 to 1222, and 1229 to 1245; these read KGGL…TTPA. Pro residues-rich tracts occupy residues 1246–1270 and 1292–1344; these read ATPP…PAAT and VTPP…PSPK. The span at 1345-1366 shows a compositional bias: low complexity; the sequence is GTPTLPATTPSSKGGPTTPSSK. Serine 1397 and serine 1474 each carry phosphoserine. Positions 1470-1481 are enriched in pro residues; it reads VTPPSPKEPPAP. Residues 1485-1507 show a composition bias toward low complexity; it reads ATSSSPKKAPATPAPMGAPTLPA. Positions 1611–1625 are enriched in pro residues; the sequence is KEAPTPPAVTPPSPE. Positions 1626–1637 are enriched in low complexity; sequence KGPATPAPKGTP. The span at 1647–1656 shows a compositional bias: polar residues; sequence LKDSPTSPAS. Positions 1744–1756 are enriched in basic and acidic residues; sequence DSSKTAKGKDASH. Residues 1794–1811 show a composition bias toward pro residues; sequence PSPPVSLPLAPSPVPTLP. The PXLXP motif lies at 1841–1845; it reads LPLIP. Residues 1876–1891 show a composition bias toward polar residues; it reads SAKQPVTKNNKGSGTE. Residues 1892–1905 are compositionally biased toward acidic residues; it reads SDSDESVPELEEQD. A Phosphoserine; by ILK1 modification is found at serine 1906. The span at 1907–1920 shows a compositional bias: low complexity; the sequence is TQATTQQAQLAAAA. The required for DNA-binding stretch occupies residues 1932 to 1943; sequence QSRSEKKARKAM. Residues 1933–1998 enclose the NAC-A/B domain; that stretch reads SRSEKKARKA…AKIEDLSQQA (66 aa). At serine 1995 the chain carries Phosphoserine. Lysine 2005 carries the N6-acetyllysine; alternate modification. A Glycyl lysine isopeptide (Lys-Gly) (interchain with G-Cter in SUMO2); alternate cross-link involves residue lysine 2005. Residue threonine 2022 is modified to Phosphothreonine; by GSK3-beta. At threonine 2024 the chain carries Phosphothreonine. 4 positions are modified to phosphoserine: serine 2029, serine 2049, serine 2054, and serine 2066. One can recognise a UBA domain in the interval 2039 to 2078; it reads VEVKDIELVMSQANVSRAKAVRALKNNSNDIVNAIMELTM.

As to quaternary structure, interacts (via PXLXP motif) with the muscle-restricted histone methyltransferase SMYD1 (via MYND-type zinc finger).

It is found in the cytoplasm. The protein localises to the nucleus. Cardiac- and muscle-specific transcription factor. May act to regulate the expression of genes involved in the development of myotubes. Plays a critical role in ventricular cardiomyocyte expansion and regulates postnatal skeletal muscle growth and regeneration. Involved in the organized assembly of thick and thin filaments of myofibril sarcomeres. The polypeptide is Nascent polypeptide-associated complex subunit alpha, muscle-specific form (NACA) (Homo sapiens (Human)).